Reading from the N-terminus, the 20-residue chain is Magnificalysin I (20 aa).

A plays an important role in the hemolytic activity region spans residues 1-10; sequence ALAGTIIAGA. The segment at 9 to 20 is N-terminal region; the sequence is GASLTFKILDEV.

Belongs to the actinoporin family. Sea anemone subfamily. Octamer or nonamer in membranes. Monomer in the soluble state.

The protein localises to the secreted. It localises to the nematocyst. It is found in the target cell membrane. In terms of biological role, pore-forming protein that forms cations-selective hydrophilic pores of around 1 nm and causes cytolysis. Pore formation is a multi-step process that involves specific recognition of membrane sphingomyelin (but neither cholesterol nor phosphatidylcholine) using aromatic rich region and adjacent phosphocholine (POC) binding site, firm binding to the membrane (mainly driven by hydrophobic interactions) accompanied by the transfer of the N-terminal region to the lipid-water interface and finally pore formation after oligomerization of monomers. In Heteractis magnifica (Magnificent sea anemone), this protein is Magnificalysin I.